We begin with the raw amino-acid sequence, 279 residues long: Arabinooligosaccharides transport system permease protein AraQ (279 aa).

6 consecutive transmembrane segments (helical) span residues 8 to 28, 79 to 99, 110 to 130, 140 to 160, 184 to 204, and 245 to 265; these read ILSWLLTIGFAFIAFIAVFPL, VWISIVIVVLSLLFSSMVGYA, FFFLLVLIILMIPFEILMLPL, VNTYTAVILPAIVAPIAVFFF, GIFFKIMLPLMGPSLAAMAIL, and ILLAGSVMTIVPIVILFIFFQ. The 190-residue stretch at 75 to 264 folds into the ABC transmembrane type-1 domain; the sequence is FGNSVWISIV…VPIVILFIFF (190 aa).

Belongs to the binding-protein-dependent transport system permease family. MalFG subfamily. In terms of assembly, the complex is composed of two ATP-binding proteins (MsmX), two transmembrane proteins (AraP and AraQ) and a solute-binding protein (AraN).

It localises to the cell membrane. Its function is as follows. Part of the ABC transporter complex AraNPQ involved in the uptake of arabinooligosaccharides. Responsible for the translocation of the substrate across the membrane. In Halalkalibacterium halodurans (strain ATCC BAA-125 / DSM 18197 / FERM 7344 / JCM 9153 / C-125) (Bacillus halodurans), this protein is Arabinooligosaccharides transport system permease protein AraQ (araQ).